A 317-amino-acid polypeptide reads, in one-letter code: tRNA(Ile)-lysidine synthase (317 aa).

Residue 30–35 participates in ATP binding; it reads SGGSDS.

This sequence belongs to the tRNA(Ile)-lysidine synthase family.

Its subcellular location is the cytoplasm. The enzyme catalyses cytidine(34) in tRNA(Ile2) + L-lysine + ATP = lysidine(34) in tRNA(Ile2) + AMP + diphosphate + H(+). In terms of biological role, ligates lysine onto the cytidine present at position 34 of the AUA codon-specific tRNA(Ile) that contains the anticodon CAU, in an ATP-dependent manner. Cytidine is converted to lysidine, thus changing the amino acid specificity of the tRNA from methionine to isoleucine. This Chlamydia caviae (strain ATCC VR-813 / DSM 19441 / 03DC25 / GPIC) (Chlamydophila caviae) protein is tRNA(Ile)-lysidine synthase.